The primary structure comprises 530 residues: Cation transporter HKT2;1 (530 aa).

Over 1–40 the chain is Cytoplasmic; the sequence is MTSIYHDFIHNKLQSFGRIGRYFVNFVVLAHRFIALHIHP. 2 helical membrane-spanning segments follow: residues 41-61 and 102-122; these read FWIQ…LLMF and IVVI…FLGL. Over 123 to 186 the chain is Cytoplasmic; it reads MLRLNHKHNP…DLKRSKRLRW (64 aa). Transmembrane regions (helical) follow at residues 187–207 and 260–280; these read FLGF…FLLV and GLLL…PLFL. The Cytoplasmic portion of the chain corresponds to 281 to 317; that stretch reads RLLIWFLGKVTKLRELKLMIKNPEELQYDYLLPKLPT. 2 consecutive transmembrane segments (helical) span residues 318 to 338 and 372 to 392; these read AFLA…FGAV and IDCS…MYLP. Topologically, residues 393–418 are cytoplasmic; that stretch reads PSTTFALSNGDEKTANKKAKRKLGLV. Transmembrane regions (helical) follow at residues 419-439 and 494-514; these read VQNL…VAFI and SLSG…MLYG. At 515-530 the chain is on the cytoplasmic side; it reads RLKAFTKGTGEYWRLW.

The protein belongs to the TrkH potassium transport family. HKT (TC 2.A.38.3) subfamily. As to expression, expressed in epidermis and vascular tissue of endodermis in roots, and in cells surrounding the vasculature in leaves.

It localises to the membrane. The catalysed reaction is Na(+)(in) = Na(+)(out). Functionally, seems to be involved in regulation of potassium-sodium homeostasis. Seems to act as a high-affinity sodium transporter, which mediates increased sodium uptake in roots under potassium deficiency and contributes to sodium accumulation and salt toxicity. Involved in nutritional sodium uptake and distribution in potassium-starved roots to allow plant growth. May also act as a potassium transporter. Functions as a sodium-potassium cotransporter. This chain is Cation transporter HKT2;1, found in Oryza sativa subsp. indica (Rice).